Reading from the N-terminus, the 610-residue chain is MSNVFDSKSFLKTVTSQPGVYRMYDAGGTVIYVGKAKDLKKRLSSYFRGNLGSRKTEALVALIEQIDVTVTHTETEALLLEHNYIKLYQPRYNVLLRDDKSYPYIFLSADHHPRLASHRGAKHAKGEYFGPFPNGYAVRETLSLLQKIFPVRQCENSVYRNRSRPCLQYQIGRCLGPCVEGLVTEEEYARQIDYVRLFLSGKDDQVLNQLVARMEQASGDLRFEEAGRLRDQIQAVRRVTEKQFVSNQGDDMDVIGVSFDSGMACLHVLFIRQGKVLGSRSYFPKVPGGTELAEVVQTFVGQFYLQGSQARTLPSDILIDFTLPEKDLLAASLTALSGRRVSIQSKPRGDRARYLKLARTNAATALITRLAQHSTIHQRLAALAQTLKLPAIGRMECFDISHTMGEQTVASCVVFDANGPLRSEYRRYNISGITPGDDYAAMNQVLRRRYGKAIEESKIPDVIVIDGGKGQLAQAKEVFAQLDVTWDKSHPLLLGVAKGTDRKAGLETLFLEPEGEGFSLPPDSPALHVIQHIRDDSHNHAITGHRNKRAKVKNTSALETIEGIGPKRRQMLLKYMGGLQPLINASKEEIARVPGISTALAEKIFYALKH.

Positions 16 to 94 (SQPGVYRMYD…IKLYQPRYNV (79 aa)) constitute a GIY-YIG domain. In terms of domain architecture, UVR spans 204–239 (DQVLNQLVARMEQASGDLRFEEAGRLRDQIQAVRRV).

Belongs to the UvrC family. As to quaternary structure, interacts with UvrB in an incision complex.

It localises to the cytoplasm. In terms of biological role, the UvrABC repair system catalyzes the recognition and processing of DNA lesions. UvrC both incises the 5' and 3' sides of the lesion. The N-terminal half is responsible for the 3' incision and the C-terminal half is responsible for the 5' incision. The sequence is that of UvrABC system protein C from Erwinia tasmaniensis (strain DSM 17950 / CFBP 7177 / CIP 109463 / NCPPB 4357 / Et1/99).